Reading from the N-terminus, the 405-residue chain is Tryptophan synthase beta chain (405 aa).

Lysine 98 carries the post-translational modification N6-(pyridoxal phosphate)lysine.

This sequence belongs to the TrpB family. In terms of assembly, tetramer of two alpha and two beta chains. Requires pyridoxal 5'-phosphate as cofactor.

The enzyme catalyses (1S,2R)-1-C-(indol-3-yl)glycerol 3-phosphate + L-serine = D-glyceraldehyde 3-phosphate + L-tryptophan + H2O. The protein operates within amino-acid biosynthesis; L-tryptophan biosynthesis; L-tryptophan from chorismate: step 5/5. The beta subunit is responsible for the synthesis of L-tryptophan from indole and L-serine. The protein is Tryptophan synthase beta chain of Xylella fastidiosa (strain M23).